A 229-amino-acid polypeptide reads, in one-letter code: tRNA (guanine-N(7)-)-methyltransferase (229 aa).

4 residues coordinate S-adenosyl-L-methionine: Glu-62, Glu-87, Asp-114, and Asp-137. Residue Asp-137 is part of the active site. Residue Lys-141 participates in substrate binding. Residues 143–148 (KHNKRR) are interaction with RNA. Residues Asp-173 and 208-211 (TKFE) contribute to the substrate site.

This sequence belongs to the class I-like SAM-binding methyltransferase superfamily. TrmB family.

It carries out the reaction guanosine(46) in tRNA + S-adenosyl-L-methionine = N(7)-methylguanosine(46) in tRNA + S-adenosyl-L-homocysteine. It functions in the pathway tRNA modification; N(7)-methylguanine-tRNA biosynthesis. Catalyzes the formation of N(7)-methylguanine at position 46 (m7G46) in tRNA. This is tRNA (guanine-N(7)-)-methyltransferase from Francisella tularensis subsp. novicida (strain U112).